The chain runs to 358 residues: Peptide chain release factor 1 (358 aa).

Gln-233 is modified (N5-methylglutamine).

It belongs to the prokaryotic/mitochondrial release factor family. Post-translationally, methylated by PrmC. Methylation increases the termination efficiency of RF1.

Its subcellular location is the cytoplasm. Functionally, peptide chain release factor 1 directs the termination of translation in response to the peptide chain termination codons UAG and UAA. The polypeptide is Peptide chain release factor 1 (Staphylococcus saprophyticus subsp. saprophyticus (strain ATCC 15305 / DSM 20229 / NCIMB 8711 / NCTC 7292 / S-41)).